We begin with the raw amino-acid sequence, 163 residues long: UPF0262 protein RPB_4349 (163 aa).

Belongs to the UPF0262 family.

The sequence is that of UPF0262 protein RPB_4349 from Rhodopseudomonas palustris (strain HaA2).